The chain runs to 159 residues: Transcription elongation factor GreA (159 aa).

Residues 46–73 (AEYHAAKEEQSFVEGRIKEIELKLSRMQ) are a coiled coil.

It belongs to the GreA/GreB family.

In terms of biological role, necessary for efficient RNA polymerase transcription elongation past template-encoded arresting sites. The arresting sites in DNA have the property of trapping a certain fraction of elongating RNA polymerases that pass through, resulting in locked ternary complexes. Cleavage of the nascent transcript by cleavage factors such as GreA or GreB allows the resumption of elongation from the new 3'terminus. GreA releases sequences of 2 to 3 nucleotides. This is Transcription elongation factor GreA from Vesicomyosocius okutanii subsp. Calyptogena okutanii (strain HA).